A 479-amino-acid chain; its full sequence is Hydrogenase-4 component D (479 aa).

A run of 15 helical transmembrane segments spans residues 3 to 23 (NLAL…SFSP), 30 to 50 (WGVL…SAFY), 55 to 75 (VAVT…LVID), 80 to 100 (LILF…TGYL), 117 to 137 (AFLL…TLLG), 168 to 188 (ALLI…TLFL), 208 to 228 (LVYG…PMQA), 238 to 258 (TPIS…YIFA), 270 to 290 (VIGG…FLMY), 300 to 320 (LAWS…LSIF), 330 to 350 (IAYI…AGAL), 369 to 389 (LPLP…VPPF), 390 to 410 (NGFF…VEYW), 411 to 431 (ILLP…AWFI), and 458 to 478 (LVLI…ATWL).

It belongs to the complex I subunit 5 family.

The protein resides in the cell inner membrane. Possible component of hydrogenase 4. The chain is Hydrogenase-4 component D from Escherichia coli (strain K12).